The following is a 554-amino-acid chain: CTP synthase (554 aa).

The amidoligase domain stretch occupies residues Met1–Leu265. Ser13 contacts CTP. Residue Ser13 coordinates UTP. Residues Ser14–Ile19 and Asp71 each bind ATP. The Mg(2+) site is built by Asp71 and Glu139. CTP contacts are provided by residues Asp146–Glu148, Lys186–Gln191, and Lys222. Residues Lys186 to Gln191 and Lys222 each bind UTP. The Glutamine amidotransferase type-1 domain maps to Asn292–Gly545. Residue Gly353 participates in L-glutamine binding. Cys380 (nucleophile; for glutamine hydrolysis) is an active-site residue. L-glutamine is bound by residues Tyr381–Gln384, Glu404, and Arg471. Residues His518 and Glu520 contribute to the active site.

The protein belongs to the CTP synthase family. Homotetramer.

It carries out the reaction UTP + L-glutamine + ATP + H2O = CTP + L-glutamate + ADP + phosphate + 2 H(+). The enzyme catalyses L-glutamine + H2O = L-glutamate + NH4(+). The catalysed reaction is UTP + NH4(+) + ATP = CTP + ADP + phosphate + 2 H(+). Its pathway is pyrimidine metabolism; CTP biosynthesis via de novo pathway; CTP from UDP: step 2/2. With respect to regulation, allosterically activated by GTP, when glutamine is the substrate; GTP has no effect on the reaction when ammonia is the substrate. The allosteric effector GTP functions by stabilizing the protein conformation that binds the tetrahedral intermediate(s) formed during glutamine hydrolysis. Inhibited by the product CTP, via allosteric rather than competitive inhibition. Its function is as follows. Catalyzes the ATP-dependent amination of UTP to CTP with either L-glutamine or ammonia as the source of nitrogen. Regulates intracellular CTP levels through interactions with the four ribonucleotide triphosphates. The protein is CTP synthase of Xanthomonas euvesicatoria pv. vesicatoria (strain 85-10) (Xanthomonas campestris pv. vesicatoria).